The primary structure comprises 637 residues: Neuroendocrine convertase 2 (637 aa).

The N-terminal stretch at 1–24 (MEGGCGSQWKAAGFLFCVMVFASA) is a signal peptide. The propeptide occupies 25–108 (ERPVFTNHFL…QQEGFDRKKR (84 aa)). Residues 128–452 (QWYLFNTGQA…YGVLDAGAMV (325 aa)) enclose the Peptidase S8 domain. Residues aspartate 166 and histidine 207 each act as charge relay system in the active site. 2 disulfide bridges follow: cysteine 224/cysteine 375 and cysteine 316/cysteine 346. Asparagine 374 carries an N-linked (GlcNAc...) asparagine glycan. The active-site Charge relay system is serine 383. Residues 460–596 (TVPERFHCVG…TLMLHGTQSA (137 aa)) form the P/Homo B domain. A disulfide bridge connects residues cysteine 467 and cysteine 493. Asparagine 513 and asparagine 523 each carry an N-linked (GlcNAc...) asparagine glycan.

It belongs to the peptidase S8 family. Furin subfamily.

It is found in the cytoplasmic vesicle. The protein localises to the secretory vesicle. Its subcellular location is the secreted. It carries out the reaction Release of protein hormones and neuropeptides from their precursors, generally by hydrolysis of -Lys-Arg-|- bonds.. In terms of biological role, serine endopeptidase which is involved in the processing of hormone and other protein precursors at sites comprised of pairs of basic amino acid residues. Responsible for the release of glucagon from proglucagon in pancreatic A cells. The polypeptide is Neuroendocrine convertase 2 (Pcsk2) (Mus musculus (Mouse)).